We begin with the raw amino-acid sequence, 360 residues long: Molybdenum import ATP-binding protein ModC (360 aa).

The ABC transporter domain maps to Val-5 to Asp-234. Gly-32–Thr-39 is an ATP binding site. Residues His-295–Ala-360 form the Mop domain.

It belongs to the ABC transporter superfamily. Molybdate importer (TC 3.A.1.8) family. As to quaternary structure, the complex is composed of two ATP-binding proteins (ModC), two transmembrane proteins (ModB) and a solute-binding protein (ModA).

The protein resides in the cell inner membrane. It carries out the reaction molybdate(out) + ATP + H2O = molybdate(in) + ADP + phosphate + H(+). In terms of biological role, part of the ABC transporter complex ModABC involved in molybdenum import. Responsible for energy coupling to the transport system. This Pseudomonas fluorescens (strain ATCC BAA-477 / NRRL B-23932 / Pf-5) protein is Molybdenum import ATP-binding protein ModC.